The following is a 168-amino-acid chain: NAD(P)H-quinone oxidoreductase subunit J, chloroplastic (168 aa).

This sequence belongs to the complex I 30 kDa subunit family. In terms of assembly, NDH is composed of at least 16 different subunits, 5 of which are encoded in the nucleus.

The protein localises to the plastid. Its subcellular location is the chloroplast thylakoid membrane. The catalysed reaction is a plastoquinone + NADH + (n+1) H(+)(in) = a plastoquinol + NAD(+) + n H(+)(out). The enzyme catalyses a plastoquinone + NADPH + (n+1) H(+)(in) = a plastoquinol + NADP(+) + n H(+)(out). In terms of biological role, NDH shuttles electrons from NAD(P)H:plastoquinone, via FMN and iron-sulfur (Fe-S) centers, to quinones in the photosynthetic chain and possibly in a chloroplast respiratory chain. The immediate electron acceptor for the enzyme in this species is believed to be plastoquinone. Couples the redox reaction to proton translocation, and thus conserves the redox energy in a proton gradient. The sequence is that of NAD(P)H-quinone oxidoreductase subunit J, chloroplastic from Chaetosphaeridium globosum (Charophycean green alga).